The sequence spans 862 residues: Protein JOKA2 (862 aa).

One can recognise a PB1 domain in the interval 6 to 90 (SIVIKVKYEE…NPLRISARLN (85 aa)). A compositionally biased stretch (low complexity) spans 92 to 106 (GERSGRASARSSGNS). Disordered regions lie at residues 92-117 (GERS…VQPP), 194-234 (KGNT…ASNE), and 295-345 (VRNS…DSSG). The segment covering 325–345 (SASSSKVKQCNWDSPNADSSG) has biased composition (polar residues). The ZZ-type; degenerate zinc-finger motif lies at 442–492 (HKGVRCDGCGVHPITGPRFISKVKENYDLCSICFAEMGNDADYIRMDRPLT). Positions 447, 450, 471, and 474 each coordinate Zn(2+). The UBA domain occupies 811–860 (SVDDLCGVAEWDPILEELKEMGFCDKEMNKKLLKKNNGSIKRVVMDLIAG). The short motif at 817–824 (GVAEWDPI) is the ATG8 interacting motif (AIM) element.

In terms of assembly, interacts (via C-terminal AIM motif) with ATG8CL.

The protein localises to the vacuole. The protein resides in the cytoplasmic vesicle. It localises to the autophagosome. In terms of biological role, autophagic substrate that functions as a host autophagy cargo receptor. Requires ATG8 protein expression to be recognized as an autophagic substrate. Activates ATG8CL-mediated selective autophagy, and contributes to defense against the fungal pathogen Phytophtora infestans. The protein is Protein JOKA2 of Solanum tuberosum (Potato).